A 503-amino-acid polypeptide reads, in one-letter code: Glutamate--tRNA ligase (503 aa).

The 'HIGH' region signature appears at 14-24; that stretch reads PSPTGSLHIGG. The 'KMSKS' region signature appears at 261-265; that stretch reads KLSKR. Lys264 contacts ATP.

It belongs to the class-I aminoacyl-tRNA synthetase family. Glutamate--tRNA ligase type 1 subfamily. In terms of assembly, monomer.

It is found in the cytoplasm. It carries out the reaction tRNA(Glu) + L-glutamate + ATP = L-glutamyl-tRNA(Glu) + AMP + diphosphate. Its function is as follows. Catalyzes the attachment of glutamate to tRNA(Glu) in a two-step reaction: glutamate is first activated by ATP to form Glu-AMP and then transferred to the acceptor end of tRNA(Glu). This chain is Glutamate--tRNA ligase, found in Chloroflexus aurantiacus (strain ATCC 29366 / DSM 635 / J-10-fl).